The following is a 213-amino-acid chain: Redox-sensing transcriptional repressor Rex (213 aa).

A DNA-binding region (H-T-H motif) is located at residues 16 to 55 (IYYRYLRLLSNSGKNRVSSTELAEAVKVDSATIRRDFSYF). 90-95 (GVGNLG) provides a ligand contact to NAD(+).

Belongs to the transcriptional regulatory Rex family. As to quaternary structure, homodimer.

It localises to the cytoplasm. In terms of biological role, modulates transcription in response to changes in cellular NADH/NAD(+) redox state. The chain is Redox-sensing transcriptional repressor Rex from Ligilactobacillus salivarius (strain UCC118) (Lactobacillus salivarius).